Here is a 374-residue protein sequence, read N- to C-terminus: Gustatory receptor 23a (374 aa).

Residues 1-6 (MFPPTR) are Cytoplasmic-facing. A helical membrane pass occupies residues 7-27 (VQASSRVVLKIFHFILVAFSL). Over 28–36 (RSRRLSRLV) the chain is Extracellular. The chain crosses the membrane as a helical span at residues 37–57 (LWLQFLGWLTWFISMWTQSVI). Residues 58–72 (YAQTIDCTLDCSLRH) lie on the Cytoplasmic side of the membrane. The chain crosses the membrane as a helical span at residues 73-93 (ILTFFQTVSHAFIVVTSFLDG). Residues 94 to 112 (FRIKQDQLDEPIAFEDSDP) are Extracellular-facing. The chain crosses the membrane as a helical span at residues 113–133 (WLAFTVLAMLVPTLGVEYLVC). The Cytoplasmic segment spans residues 134 to 226 (SNAPEYAFRI…YNDLHYLFVR (93 aa)). Residues 227-247 (INGYFGGSLLTIIIVHFAIFV) form a helical membrane-spanning segment. Residues 248–263 (SNSYWLFVDIRTRPWR) lie on the Extracellular side of the membrane. The helical transmembrane segment at 264 to 284 (IYAILLNLGFIFNVALQMAAA) threads the bilayer. Over 285–343 (CWHCQQSYNLGRQIGCLISKLVKPQGSKLYNDLVSEFSLQTLHQRFVVTAKDFFSLNLH) the chain is Cytoplasmic. A helical membrane pass occupies residues 344–364 (LLSSMFAAVVTYLVILIQFMF). Topologically, residues 365 to 374 (AERSSTRGSG) are extracellular.

This sequence belongs to the insect chemoreceptor superfamily. Gustatory receptor (GR) family. Gr2a subfamily. As to expression, expressed in the adult labellar chemosensory neurons and labral sense organ. Expressed in neurons of the dorsal pharyngeal sense organ of larvae.

The protein localises to the cell membrane. Its function is as follows. Probable gustatory receptor which mediates acceptance or avoidance behavior, depending on its substrates. The chain is Gustatory receptor 23a (Gr23a) from Drosophila melanogaster (Fruit fly).